A 181-amino-acid chain; its full sequence is Transcription factor bHLH167 (181 aa).

Residues 1-22 (MGRAREIGEGNSSSLREQRNLR) form a disordered region. A bHLH domain is found at 14–63 (SLREQRNLREKDRRMRMKHLFSILSSHVSPTRKLPVPHLIDQATSYMIQL).

It belongs to the bHLH protein family.

The protein localises to the nucleus. The chain is Transcription factor bHLH167 from Arabidopsis thaliana (Mouse-ear cress).